A 380-amino-acid polypeptide reads, in one-letter code: DNA-directed RNA polymerase subunit Rpo1C (380 aa).

Belongs to the RNA polymerase beta' chain family. As to quaternary structure, part of the RNA polymerase complex.

It is found in the cytoplasm. It carries out the reaction RNA(n) + a ribonucleoside 5'-triphosphate = RNA(n+1) + diphosphate. Functionally, DNA-dependent RNA polymerase (RNAP) catalyzes the transcription of DNA into RNA using the four ribonucleoside triphosphates as substrates. Forms part of the jaw domain. This is DNA-directed RNA polymerase subunit Rpo1C from Archaeoglobus fulgidus (strain ATCC 49558 / DSM 4304 / JCM 9628 / NBRC 100126 / VC-16).